The following is a 491-amino-acid chain: bZIP transcription factor hapX (491 aa).

A disordered region spans residues 19 to 73 (AKPAISPSPGPGTPGSITSKEWVIPPRPKPGRKPATDTPPTKRKAQNRAAQRAFR). The bZIP domain maps to 55–95 (DTPPTKRKAQNRAAQRAFRERRAARVNELEEQIKKIEDEHE). A basic motif region spans residues 60 to 79 (KRKAQNRAAQRAFRERRAAR). The leucine-zipper stretch occupies residues 83–90 (LEEQIKKI). The span at 149 to 161 (SSLSDREAVRSDK) shows a compositional bias: basic and acidic residues. Disordered regions lie at residues 149-196 (SSLS…REEV), 224-245 (EQSR…KPDP), and 397-416 (VSRG…SAAP). The segment covering 397 to 413 (VSRGRSGSNNNTSSGSS) has biased composition (low complexity).

Belongs to the bZIP family. YAP subfamily.

It localises to the nucleus. Functionally, transcription factor required for repression of genes during iron starvation. Represses iron-dependent and mitochondrial-localized activities including respiration, TCA cycle, amino acid metabolism, iron-sulfur-cluster and heme biosynthesis. Iron starvation causes a massive remodeling of the amino acid pool and hapX is essential for the coordination of the production of siderophores and their precursor ornithine. This is bZIP transcription factor hapX from Aspergillus fumigatus (strain ATCC MYA-4609 / CBS 101355 / FGSC A1100 / Af293) (Neosartorya fumigata).